A 208-amino-acid chain; its full sequence is Large ribosomal subunit protein uL4 (208 aa).

Residues 42–77 are disordered; sequence SMRQGTHKTKTKTEVSGGGRKPWRQKGTGRARQGSI.

The protein belongs to the universal ribosomal protein uL4 family. In terms of assembly, part of the 50S ribosomal subunit.

In terms of biological role, one of the primary rRNA binding proteins, this protein initially binds near the 5'-end of the 23S rRNA. It is important during the early stages of 50S assembly. It makes multiple contacts with different domains of the 23S rRNA in the assembled 50S subunit and ribosome. Forms part of the polypeptide exit tunnel. In Spiroplasma kunkelii, this protein is Large ribosomal subunit protein uL4.